Here is a 182-residue protein sequence, read N- to C-terminus: uncharacterized protein (182 aa).

The next 2 membrane-spanning stretches (helical) occupy residues 76 to 96 (LLLAMSTLKICPLNLVFLALA) and 114 to 130 (LDLLFVSLTTTACLIGA).

The protein localises to the membrane. This is an uncharacterized protein from Saccharomyces cerevisiae (strain ATCC 204508 / S288c) (Baker's yeast).